The sequence spans 362 residues: MGQSVSRDDFIWTLTEQPHMSRREEIVKKYPEVKKLFGVDPSLKYVVSSLVIFQIFMCWLLQDADWILIILEAYFCGGIINHAMTLAIHDISHNTAFGNKYPLKNRFFGMWANLPIAVPISVSFKKYHVEHHRYLGEDGLDTDVPTTFEAEFFTTAPRKLLWLALQPFFYGFRPLIIYKKAPTDMEILNAIIQISFDLLILHFFGVKSLFYLLFGTIISMGLHPSAGHFISEHYAFKEDQETFSYYGLWNLCTFNVGYHVEHHDFPYIPGRDLPKLRAMAPEYYENLLKHTSMMQILTEFVVNPAMGPYARLKRKPRVAQEFYGNYQLFEYVEGFLHHIGVYRLQKFAVNVFDLNNNSKKLN.

The next 3 helical transmembrane spans lie at 45-61 (YVVS…CWLL), 71-91 (LEAY…IHDI), and 107-127 (FFGM…FKKY). The Histidine box-1 signature appears at 89–93 (HDISH). The Histidine box-2 signature appears at 128-132 (HVEHH). Helical transmembrane passes span 160–177 (LLWL…PLII) and 198–218 (LLIL…GTII). The Histidine box-3 signature appears at 259-263 (HVEHH).

The protein belongs to the fatty acid desaturase type 1 family. DEGS subfamily.

It is found in the membrane. The enzyme catalyses an N-acyl-15-methylhexadecasphinganine + 2 Fe(II)-[cytochrome b5] + O2 + 2 H(+) = an N-acyl-4-hydroxy-15-methylhexadecasphinganine + 2 Fe(III)-[cytochrome b5] + H2O. It carries out the reaction an N-acyl-15-methylhexadecasphinganine + 2 Fe(II)-[cytochrome b5] + O2 + 2 H(+) = an N-acyl-15-methylhexadecasphing-4-enine + 2 Fe(III)-[cytochrome b5] + 2 H2O. It catalyses the reaction a dihydroceramide + 2 Fe(II)-[cytochrome b5] + O2 + 2 H(+) = a phytoceramide + 2 Fe(III)-[cytochrome b5] + H2O. The catalysed reaction is an N-acylsphinganine + 2 Fe(II)-[cytochrome b5] + O2 + 2 H(+) = an N-acylsphing-4-enine + 2 Fe(III)-[cytochrome b5] + 2 H2O. The enzyme catalyses N-octanoylsphinganine + 2 Fe(II)-[cytochrome b5] + O2 + 2 H(+) = N-octanoyl-4-hydroxysphinganine + 2 Fe(III)-[cytochrome b5] + H2O. It carries out the reaction an N-acylsphinganine + 2 Fe(II)-[cytochrome b5] + O2 + 2 H(+) = an N-acyl-(4R)-4-hydroxysphinganine + 2 Fe(III)-[cytochrome b5] + H2O. Its pathway is lipid metabolism; sphingolipid metabolism. Bifunctional enzyme which acts both as a sphingolipid delta(4)-desaturase and a sphingolipid C4-monooxygenase. C.elegans contain specific sphingoid bases, which are unique or different in structure compared to the sphingoid bases found in other animals. Two examples of these distinctive compounds are: 15-methylhexadecasphinganine and 15-methylhexadecasphing-4-enine and this enzyme can catalyze their conversion. This is Putative sphingolipid delta(4)-desaturase/C4-monooxygenase (ttm-5) from Caenorhabditis elegans.